A 236-amino-acid chain; its full sequence is MTNTWNRLALLIFAVLSLLVAGELQAGVVVGGTRFIFPADRESISILLTNTSQESWLINSKINRPTRWAGGEASTVPAPLLAAPPLILLKPGTTGTLRLLRTESDILPVDRETLFELSIASVPSGKVENQSVKVAMRSVFKLFWRPEGLPGDPLEAYQQLRWTRNSQGVQLTNPTPYYINLIQVSVNGKALSNVGVVPPKSQRQTSWCQAIAPCHVAWRAINDYGGLSAKKEQNLP.

Positions 1 to 26 (MTNTWNRLALLIFAVLSLLVAGELQA) are cleaved as a signal peptide.

This sequence belongs to the periplasmic pilus chaperone family.

It is found in the periplasm. Part of the elfADCG-ycbUVF fimbrial operon, which promotes adhesion of bacteria to different abiotic surfaces. Could be required for the biogenesis of fimbriae. This is an uncharacterized protein from Escherichia coli (strain K12).